A 177-amino-acid polypeptide reads, in one-letter code: Phosphatidylglycerol/phosphatidylinositol transfer protein (177 aa).

Positions 1–17 are cleaved as a signal peptide; that stretch reads MRLSAAVIALLSTSAAA. Positions 18–30 are excised as a propeptide; that stretch reads FSVYRENSVSAND.

It belongs to the NPC2 family. As to quaternary structure, monomer.

In terms of biological role, catalyzes the intermembrane transfer of phosphatidylglycerol and phosphatidylinositol. The polypeptide is Phosphatidylglycerol/phosphatidylinositol transfer protein (npc-2) (Neurospora crassa (strain ATCC 24698 / 74-OR23-1A / CBS 708.71 / DSM 1257 / FGSC 987)).